The sequence spans 211 residues: Large ribosomal subunit protein uL4 (211 aa).

A disordered region spans residues Gln40–Thr80. Polar residues predominate over residues Gln41–Arg54. Residues Gly60–Gly71 show a composition bias toward basic residues.

The protein belongs to the universal ribosomal protein uL4 family. Part of the 50S ribosomal subunit.

One of the primary rRNA binding proteins, this protein initially binds near the 5'-end of the 23S rRNA. It is important during the early stages of 50S assembly. It makes multiple contacts with different domains of the 23S rRNA in the assembled 50S subunit and ribosome. Functionally, forms part of the polypeptide exit tunnel. The polypeptide is Large ribosomal subunit protein uL4 (Prochlorococcus marinus (strain MIT 9211)).